The sequence spans 136 residues: MARVTVEDCIDKVENRFELVLLAGHRARLLSSGAPLTVDRDRDKNPVVALREIADQTITPDDLKEQLIHSLQKYVEVDEPEAEAVPLLSSSPAAAAVAPQSSGDDGDIQFDRMSEEDLLRGLENLAPPTETEDEGD.

The segment at 81-136 (EAEAVPLLSSSPAAAAVAPQSSGDDGDIQFDRMSEEDLLRGLENLAPPTETEDEGD) is disordered. Low complexity predominate over residues 83-99 (EAVPLLSSSPAAAAVAP). The segment covering 109 to 120 (QFDRMSEEDLLR) has biased composition (basic and acidic residues).

This sequence belongs to the RNA polymerase subunit omega family. The RNAP catalytic core consists of 2 alpha, 1 beta, 1 beta' and 1 omega subunit. When a sigma factor is associated with the core the holoenzyme is formed, which can initiate transcription.

It catalyses the reaction RNA(n) + a ribonucleoside 5'-triphosphate = RNA(n+1) + diphosphate. Promotes RNA polymerase assembly. Latches the N- and C-terminal regions of the beta' subunit thereby facilitating its interaction with the beta and alpha subunits. The polypeptide is DNA-directed RNA polymerase subunit omega (Methylobacterium nodulans (strain LMG 21967 / CNCM I-2342 / ORS 2060)).